An 87-amino-acid chain; its full sequence is U3-theraphotoxin-Cg1c (87 aa).

Residues 1-23 form the signal peptide; that stretch reads MRTFTLIAILTCAVLVIFHVSAA. Residues 24–51 constitute a propeptide that is removed on maturation; the sequence is EELEAQDVIQPEDIFTGVATLEEDRIFE. 3 disulfides stabilise this stretch: Cys-52/Cys-65, Cys-56/Cys-79, and Cys-73/Cys-84.

The protein belongs to the neurotoxin 12 (Hwtx-2) family. 03 (juruin) subfamily. As to expression, expressed by the venom gland.

The protein localises to the secreted. Its function is as follows. Probable ion channel inhibitor. The protein is U3-theraphotoxin-Cg1c of Chilobrachys guangxiensis (Chinese earth tiger tarantula).